Reading from the N-terminus, the 531-residue chain is Cation transporter HKT1;3 (531 aa).

Topologically, residues 1–46 are cytoplasmic; the sequence is MNHCLVVSHKKLQTFRTFAASKFSSFTKSAQKSIKYSFQFIYQNNP. Helical transmembrane passes span 47–67 and 108–128; these read LFVH…SLKV and LWVL…MLGI. Residues 129 to 190 are Cytoplasmic-facing; that stretch reads HFMRAEFGTK…GGHVEPKTIK (62 aa). 2 helical membrane-spanning segments follow: residues 191–211 and 264–284; these read FLGF…SLLI and ILLL…APCL. Topologically, residues 285 to 321 are cytoplasmic; sequence RLMVWSLEKITGKKDCRYILEYPKAIGYKHLMSTRES. Helical transmembrane passes span 322–342 and 383–403; these read VYLT…FLSL and SAIL…SFLP. Residues 404 to 421 lie on the Cytoplasmic side of the membrane; it reads RHDGEDSKTEKINKRKGL. 2 helical membrane passes run 422–442 and 494–514; these read LENW…LICI and YGFA…VMLF. Topologically, residues 515-530 are cytoplasmic; sequence GRLKTFNMKGGRAWKL.

Belongs to the TrkH potassium transport family. HKT (TC 2.A.38.3) subfamily. In terms of assembly, interacts with CNIH1. In terms of tissue distribution, weakly expressed. In roots, expressed in epidermis, exodermis, cortex, and sieve elements and companion cells of phloem. In mature leaves, expressed in large highly vacuolated cells of the adaxial epidermis, phloem and xylem.

Its subcellular location is the endoplasmic reticulum membrane. The protein resides in the golgi apparatus membrane. It catalyses the reaction Na(+)(in) = Na(+)(out). Functionally, functions as a highly-selective sodium transporter. Does not seem to function as sodium-potassium cotransporter. May be involved in turgor changes for rolling and unrolling of leaves in response to environmental variations. The sequence is that of Cation transporter HKT1;3 from Oryza sativa subsp. japonica (Rice).